A 626-amino-acid polypeptide reads, in one-letter code: Chaperone protein DnaK (626 aa).

Threonine 175 carries the phosphothreonine; by autocatalysis modification. 3 disordered regions span residues 469-488 (DKGT…GLPK), 498-517 (AEAH…TRNQ), and 583-626 (AQQG…KDNK). Residues 498–516 (AEAHEAEDKKRKEDAETRN) are compositionally biased toward basic and acidic residues. Over residues 609 to 626 (SDDDVVDAEVVDDDKDNK) the composition is skewed to acidic residues.

This sequence belongs to the heat shock protein 70 family.

Its function is as follows. Acts as a chaperone. The protein is Chaperone protein DnaK of Bifidobacterium adolescentis (strain ATCC 15703 / DSM 20083 / NCTC 11814 / E194a).